The sequence spans 786 residues: Endonuclease MutS2 (786 aa).

Residue 335 to 342 coordinates ATP; sequence GPNTGGKT. Positions 711–786 constitute a Smr domain; the sequence is LDLRGERFEN…GLGVTVVELK (76 aa).

This sequence belongs to the DNA mismatch repair MutS family. MutS2 subfamily. As to quaternary structure, homodimer. Binds to stalled ribosomes, contacting rRNA.

Its function is as follows. Endonuclease that is involved in the suppression of homologous recombination and thus may have a key role in the control of bacterial genetic diversity. Acts as a ribosome collision sensor, splitting the ribosome into its 2 subunits. Detects stalled/collided 70S ribosomes which it binds and splits by an ATP-hydrolysis driven conformational change. Acts upstream of the ribosome quality control system (RQC), a ribosome-associated complex that mediates the extraction of incompletely synthesized nascent chains from stalled ribosomes and their subsequent degradation. Probably generates substrates for RQC. The sequence is that of Endonuclease MutS2 from Bacillus cereus (strain AH820).